A 358-amino-acid chain; its full sequence is MQQIMLMCRPGFETEAGQELMDSAAACGLFGYFQPIRNAGLVRFTLGGPESAFELMQRIPLDELVFVRDWFLVIGDCPLPARDRVGAVIEFLRGADWQGSLASRLETRLTETNEDRDLGNFARKWVAPLSRGLREADMLAQDSASAKGDRLELLLLDFETAVVGLSLADNRSPFPQGIPRLRLPASAPSRSALKLEEAWKVFIPEDRYLDYLGGGRKAVDLGAAPGGWTWQLVQQGMMVTAVDNGPMNPELMATGHVEHVRADGYAWRPKRAVDWMVCDIVDKPRKTARLALDWVGGKLCRYTVFNLKLPMKKRYEEWLICRDILLQGLAEAELNCRLRARHLYHDREEITCFIERLD.

S-adenosyl-L-methionine contacts are provided by residues Ser191, 224–227 (APGG), Asp243, Asp263, and Asp279. Catalysis depends on Lys308, which acts as the Proton acceptor.

It belongs to the class I-like SAM-binding methyltransferase superfamily. RNA methyltransferase RlmE family. RlmM subfamily. As to quaternary structure, monomer.

Its subcellular location is the cytoplasm. The catalysed reaction is cytidine(2498) in 23S rRNA + S-adenosyl-L-methionine = 2'-O-methylcytidine(2498) in 23S rRNA + S-adenosyl-L-homocysteine + H(+). Its function is as follows. Catalyzes the 2'-O-methylation at nucleotide C2498 in 23S rRNA. The chain is Ribosomal RNA large subunit methyltransferase M from Marinobacter nauticus (strain ATCC 700491 / DSM 11845 / VT8) (Marinobacter aquaeolei).